The primary structure comprises 233 residues: Ribulose-phosphate 3-epimerase (233 aa).

Serine 16 is a binding site for substrate. Positions 41, 43, and 74 each coordinate a divalent metal cation. Aspartate 43 serves as the catalytic Proton acceptor. Residues histidine 74, 150–153 (GFCG), 185–187 (DGG), and 207–208 (AS) each bind substrate. Aspartate 185 provides a ligand contact to a divalent metal cation. The Proton donor role is filled by aspartate 185.

The protein belongs to the ribulose-phosphate 3-epimerase family. Requires a divalent metal cation as cofactor.

The catalysed reaction is D-ribulose 5-phosphate = D-xylulose 5-phosphate. Its pathway is carbohydrate degradation. In terms of biological role, catalyzes the reversible epimerization of D-ribulose 5-phosphate to D-xylulose 5-phosphate. The chain is Ribulose-phosphate 3-epimerase from Chlamydia trachomatis serovar D (strain ATCC VR-885 / DSM 19411 / UW-3/Cx).